Reading from the N-terminus, the 338-residue chain is Lipoate-protein ligase A (338 aa).

The region spanning 29–216 (PATQRVLFLW…AFFAHYGERV (188 aa)) is the BPL/LPL catalytic domain. ATP-binding positions include arginine 71, 76 to 79 (GAVF), and lysine 134. Residue lysine 134 coordinates (R)-lipoate.

The protein belongs to the LplA family. In terms of assembly, monomer.

Its subcellular location is the cytoplasm. It catalyses the reaction L-lysyl-[lipoyl-carrier protein] + (R)-lipoate + ATP = N(6)-[(R)-lipoyl]-L-lysyl-[lipoyl-carrier protein] + AMP + diphosphate + H(+). It functions in the pathway protein modification; protein lipoylation via exogenous pathway; protein N(6)-(lipoyl)lysine from lipoate: step 1/2. It participates in protein modification; protein lipoylation via exogenous pathway; protein N(6)-(lipoyl)lysine from lipoate: step 2/2. Its function is as follows. Catalyzes both the ATP-dependent activation of exogenously supplied lipoate to lipoyl-AMP and the transfer of the activated lipoyl onto the lipoyl domains of lipoate-dependent enzymes. This chain is Lipoate-protein ligase A, found in Shigella dysenteriae serotype 1 (strain Sd197).